We begin with the raw amino-acid sequence, 360 residues long: Phosphate acyltransferase (360 aa).

Belongs to the PlsX family. As to quaternary structure, homodimer. Probably interacts with PlsY.

It is found in the cytoplasm. The catalysed reaction is a fatty acyl-[ACP] + phosphate = an acyl phosphate + holo-[ACP]. It functions in the pathway lipid metabolism; phospholipid metabolism. Catalyzes the reversible formation of acyl-phosphate (acyl-PO(4)) from acyl-[acyl-carrier-protein] (acyl-ACP). This enzyme utilizes acyl-ACP as fatty acyl donor, but not acyl-CoA. In Janthinobacterium sp. (strain Marseille) (Minibacterium massiliensis), this protein is Phosphate acyltransferase.